A 776-amino-acid chain; its full sequence is Reticulon-1 (776 aa).

4 disordered regions span residues 1–103 (MAAP…GEGS), 136–168 (ISES…DSGI), 204–244 (EVKH…EPAP), and 285–580 (LTEI…APPP). Residues 204-240 (EVKHQEQNHPELEDKDLDFKNKDTDISIKPEGVREPD) are compositionally biased toward basic and acidic residues. Serine 327 carries the post-translational modification Phosphoserine. Residues 328–341 (PGSITPPSSGTEPS) show a composition bias toward low complexity. Phosphoserine occurs at positions 350, 352, and 487. Residues 497-511 (AIREETGVRAEERAP) are compositionally biased toward basic and acidic residues. The 188-residue stretch at 589 to 776 (AIDLLYWRDI…KIPGAKRHAE (188 aa)) folds into the Reticulon domain. Transmembrane regions (helical) follow at residues 603–623 (IVFG…VVSV) and 705–725 (FAVL…LTLL).

In terms of assembly, interacts with NDRG1. Interacts with BACE1. Interacts with TMEM33. Post-translationally, phosphorylated.

It is found in the endoplasmic reticulum membrane. It localises to the golgi apparatus membrane. Inhibits amyloid precursor protein processing, probably by blocking BACE1 activity. The protein is Reticulon-1 (RTN1) of Pan troglodytes (Chimpanzee).